An 879-amino-acid chain; its full sequence is Aminopeptidase M1 (879 aa).

Residues 98 to 205 (HGVGVLKLGF…MSTYLVAIVV (108 aa)) are required for membrane association. Residues Glu138 and 271-275 (GAMEN) each bind substrate. His307 contacts Zn(2+). The Proton acceptor role is filled by Glu308. Residues His311 and Glu330 each coordinate Zn(2+). The short motif at 728-729 (LL) is the Dileucine internalization motif element.

This sequence belongs to the peptidase M1 family. Homodimer. Interacts with N-1-naphthylphthalamic acid (NPA). The cofactor is Zn(2+). As to expression, ubiquitous with preferential expression in 5 days-old seedlings, roots, young flowers, upper inflorescence stems, and rosette leaves.

It localises to the membrane. The protein localises to the microsome membrane. Its subcellular location is the cytoplasm. It carries out the reaction Release of an N-terminal amino acid, Xaa-|-Yaa- from a peptide, amide or arylamide. Xaa is preferably Ala, but may be most amino acids including Pro (slow action). When a terminal hydrophobic residue is followed by a prolyl residue, the two may be released as an intact Xaa-Pro dipeptide.. Functionally, metallopeptidase that binds to the auxin transport inhibitor N-1-naphthylphthalamic acid (NPA). Required for embryonic and seedling development as well as cell cycle progression. Homodimerization is required to proper localization and activity. May play a negative role in the regulation of PIN auxin transport proteins. In Arabidopsis thaliana (Mouse-ear cress), this protein is Aminopeptidase M1 (APM1).